A 126-amino-acid polypeptide reads, in one-letter code: Aspartate 1-decarboxylase (126 aa).

Catalysis depends on Ser25, which acts as the Schiff-base intermediate with substrate; via pyruvic acid. Ser25 carries the post-translational modification Pyruvic acid (Ser). Position 57 (Thr57) interacts with substrate. Tyr58 serves as the catalytic Proton donor. 73–75 (GAA) contacts substrate.

Belongs to the PanD family. In terms of assembly, heterooctamer of four alpha and four beta subunits. Pyruvate is required as a cofactor. Post-translationally, is synthesized initially as an inactive proenzyme, which is activated by self-cleavage at a specific serine bond to produce a beta-subunit with a hydroxyl group at its C-terminus and an alpha-subunit with a pyruvoyl group at its N-terminus.

Its subcellular location is the cytoplasm. It carries out the reaction L-aspartate + H(+) = beta-alanine + CO2. The protein operates within cofactor biosynthesis; (R)-pantothenate biosynthesis; beta-alanine from L-aspartate: step 1/1. Its function is as follows. Catalyzes the pyruvoyl-dependent decarboxylation of aspartate to produce beta-alanine. The chain is Aspartate 1-decarboxylase from Escherichia coli O6:K15:H31 (strain 536 / UPEC).